The following is a 433-amino-acid chain: Enolase (433 aa).

Gln167 lines the (2R)-2-phosphoglycerate pocket. Glu209 functions as the Proton donor in the catalytic mechanism. Asp246, Glu291, and Asp318 together coordinate Mg(2+). The (2R)-2-phosphoglycerate site is built by Lys343, Arg372, Ser373, and Lys394. Residue Lys343 is the Proton acceptor of the active site.

The protein belongs to the enolase family. Component of the RNA degradosome, a multiprotein complex involved in RNA processing and mRNA degradation. It depends on Mg(2+) as a cofactor.

It is found in the cytoplasm. The protein resides in the secreted. It localises to the cell surface. The catalysed reaction is (2R)-2-phosphoglycerate = phosphoenolpyruvate + H2O. It participates in carbohydrate degradation; glycolysis; pyruvate from D-glyceraldehyde 3-phosphate: step 4/5. Functionally, catalyzes the reversible conversion of 2-phosphoglycerate (2-PG) into phosphoenolpyruvate (PEP). It is essential for the degradation of carbohydrates via glycolysis. The chain is Enolase from Sodalis glossinidius (strain morsitans).